The primary structure comprises 400 residues: Calsequestrin-2 (400 aa).

Positions Met1 to Ala19 are cleaved as a signal peptide. Phosphotyrosine is present on Tyr282. N-linked (GlcNAc...) asparagine glycosylation is present at Asn335. The disordered stretch occupies residues Val365–Glu400. The segment covering Glu373 to Glu400 has biased composition (acidic residues).

It belongs to the calsequestrin family. Monomer, homodimer and homooligomer. Mostly monomeric in the absence of calcium. Forms higher oligomers in a calcium-dependent manner. Dimers associate to form tetramers, that then form linear homomer chains. Interacts with ASPH and TRDN. Phosphorylation in the C-terminus, probably by CK2, moderately increases calcium buffering capacity. Post-translationally, N-glycosylated.

The protein resides in the sarcoplasmic reticulum lumen. Functionally, calsequestrin is a high-capacity, moderate affinity, calcium-binding protein and thus acts as an internal calcium store in muscle. Calcium ions are bound by clusters of acidic residues at the protein surface, especially at the interface between subunits. Can bind around 60 Ca(2+) ions. Regulates the release of lumenal Ca(2+) via the calcium release channel RYR2; this plays an important role in triggering muscle contraction. Plays a role in excitation-contraction coupling in the heart and in regulating the rate of heart beats. The polypeptide is Calsequestrin-2 (CASQ2) (Pongo abelii (Sumatran orangutan)).